Consider the following 699-residue polypeptide: Elongation factor G (699 aa).

One can recognise a tr-type G domain in the interval 8–283; it reads EQIRNIGICA…AIVDFLPSPI (276 aa). GTP-binding positions include 17–24, 81–85, and 135–138; these read AHIDAGKT, DTPGH, and NKMD.

Belongs to the TRAFAC class translation factor GTPase superfamily. Classic translation factor GTPase family. EF-G/EF-2 subfamily.

It is found in the cytoplasm. Its function is as follows. Catalyzes the GTP-dependent ribosomal translocation step during translation elongation. During this step, the ribosome changes from the pre-translocational (PRE) to the post-translocational (POST) state as the newly formed A-site-bound peptidyl-tRNA and P-site-bound deacylated tRNA move to the P and E sites, respectively. Catalyzes the coordinated movement of the two tRNA molecules, the mRNA and conformational changes in the ribosome. The protein is Elongation factor G (fusA) of Rickettsia prowazekii (strain Madrid E).